The following is a 318-amino-acid chain: Methionyl-tRNA formyltransferase (318 aa).

Residue 112-115 (SLLP) coordinates (6S)-5,6,7,8-tetrahydrofolate.

Belongs to the Fmt family.

It carries out the reaction L-methionyl-tRNA(fMet) + (6R)-10-formyltetrahydrofolate = N-formyl-L-methionyl-tRNA(fMet) + (6S)-5,6,7,8-tetrahydrofolate + H(+). Attaches a formyl group to the free amino group of methionyl-tRNA(fMet). The formyl group appears to play a dual role in the initiator identity of N-formylmethionyl-tRNA by promoting its recognition by IF2 and preventing the misappropriation of this tRNA by the elongation apparatus. This Citrifermentans bemidjiense (strain ATCC BAA-1014 / DSM 16622 / JCM 12645 / Bem) (Geobacter bemidjiensis) protein is Methionyl-tRNA formyltransferase.